Reading from the N-terminus, the 188-residue chain is Phosphoribosylglycinamide formyltransferase (188 aa).

12-14 is a binding site for N(1)-(5-phospho-beta-D-ribosyl)glycinamide; that stretch reads GSN. (6R)-10-formyltetrahydrofolate-binding positions include lysine 66, 91-94, and asparagine 108; that span reads MRLI. Histidine 110 acts as the Proton donor in catalysis.

Belongs to the GART family.

The enzyme catalyses N(1)-(5-phospho-beta-D-ribosyl)glycinamide + (6R)-10-formyltetrahydrofolate = N(2)-formyl-N(1)-(5-phospho-beta-D-ribosyl)glycinamide + (6S)-5,6,7,8-tetrahydrofolate + H(+). Its pathway is purine metabolism; IMP biosynthesis via de novo pathway; N(2)-formyl-N(1)-(5-phospho-D-ribosyl)glycinamide from N(1)-(5-phospho-D-ribosyl)glycinamide (10-formyl THF route): step 1/1. Catalyzes the transfer of a formyl group from 10-formyltetrahydrofolate to 5-phospho-ribosyl-glycinamide (GAR), producing 5-phospho-ribosyl-N-formylglycinamide (FGAR) and tetrahydrofolate. The chain is Phosphoribosylglycinamide formyltransferase from Staphylococcus aureus (strain MRSA252).